A 796-amino-acid chain; its full sequence is Volume-regulated anion channel subunit LRRC8E (796 aa).

At 1 to 22 the chain is on the cytoplasmic side; sequence MIPVAEFKQFTEQQPAFKVLKP. The helical transmembrane segment at 23–43 threads the bilayer; that stretch reads WWDVLAEYLTVAMLMIGVFGC. The Extracellular segment spans residues 44 to 116; sequence TLQVTQDKII…YETALHWYAK (73 aa). Cys54 and Cys301 are joined by a disulfide. The N-linked (GlcNAc...) asparagine glycan is linked to Asn63. A helical membrane pass occupies residues 117 to 137; it reads YFPYLVVIHTLIFMVCTSFWF. The Cytoplasmic portion of the chain corresponds to 138–265; sequence KFPGTSSKIE…IRQTVLKVCK (128 aa). Residues 266–286 form a helical membrane-spanning segment; it reads FLAILVYNLVYVEKISFLVAC. The Extracellular portion of the chain corresponds to 287 to 313; that stretch reads RVETSEVTGYASFCCNHTKAHLFSKLA. Asn302 carries N-linked (GlcNAc...) asparagine glycosylation. Residues 314–334 traverse the membrane as a helical segment; the sequence is FCYISFVCIYGLTCIYTLYWL. Residues 335–796 are Cytoplasmic-facing; sequence FHRPLKEYSF…AEVRDKMEEE (462 aa). 11 LRR repeats span residues 508–529, 536–557, 559–579, 583–604, 606–627, 631–652, 654–675, 677–698, 700–721, 723–744, and 746–767; these read GLEELHLEGLFPQELARAATLE, QLKVLSLRSNAGKVPASVTDVA, HLQRLSLHNDGARLVALNSLK, ALRELELVACGLERIPHAVFSL, ALQELDLKDNHLRSIEEILSFQ, KLVTLRLWHNQIAYVPEHVRKL, SLEQLYLSYNKLETLPSQLGLC, GLRLLDVSHNGLHSLPPEVGLL, NLQHLALSYNALEALPEELFFC, KLRTLLLGDNQLSQLSPHVGAL, and ALSRLELKGNRLEALPEELGNC.

It belongs to the LRRC8 family. In terms of assembly, heterohexamer; oligomerizes with other LRRC8 proteins (LRRC8A, LRRC8C, LRRC8D and/or LRRC8B) to form a heterohexamer. In vivo, the subunit composition may depend primarily on expression levels, and heterooligomeric channels containing various proportions of the different LRRC8 proteins may coexist.

Its subcellular location is the cell membrane. The protein resides in the endoplasmic reticulum membrane. It is found in the lysosome membrane. It catalyses the reaction chloride(in) = chloride(out). It carries out the reaction iodide(out) = iodide(in). The enzyme catalyses taurine(out) = taurine(in). The catalysed reaction is 2',3'-cGAMP(out) = 2',3'-cGAMP(in). In terms of biological role, non-essential component of the volume-regulated anion channel (VRAC, also named VSOAC channel), an anion channel required to maintain a constant cell volume in response to extracellular or intracellular osmotic changes. The VRAC channel conducts iodide better than chloride and can also conduct organic osmolytes like taurine. Mediates efflux of amino acids, such as aspartate, in response to osmotic stress. The VRAC channel also mediates transport of immunoreactive cyclic dinucleotide GMP-AMP (2'-3'-cGAMP), an immune messenger produced in response to DNA virus in the cytosol. Channel activity requires LRRC8A plus at least one other family member (LRRC8B, LRRC8C, LRRC8D or LRRC8E); channel characteristics depend on the precise subunit composition. Also plays a role in lysosome homeostasis by forming functional lysosomal VRAC channels in response to low cytoplasmic ionic strength condition: lysosomal VRAC channels are necessary for the formation of large lysosome-derived vacuoles, which store and then expel excess water to maintain cytosolic water homeostasis. The sequence is that of Volume-regulated anion channel subunit LRRC8E from Homo sapiens (Human).